A 32-amino-acid polypeptide reads, in one-letter code: MSLLVQVISLVVISVVVIIIPPCGAALGRIKA.

This chain is ilv operon leader peptide (ilvL), found in Edwardsiella tarda.